The sequence spans 500 residues: Lysine--tRNA ligase (500 aa).

Residues glutamate 410 and glutamate 417 each coordinate Mg(2+).

It belongs to the class-II aminoacyl-tRNA synthetase family. Homodimer. It depends on Mg(2+) as a cofactor.

The protein localises to the cytoplasm. The enzyme catalyses tRNA(Lys) + L-lysine + ATP = L-lysyl-tRNA(Lys) + AMP + diphosphate. This is Lysine--tRNA ligase from Pseudomonas putida (strain W619).